A 190-amino-acid polypeptide reads, in one-letter code: MTESLVLSPAPAKPKRVKASRRSASHPTYSEMIAAAIRAEKSRGGSSRQSIQKYIKSHYKVGHNADLQIKLSIRRLLAAGVLKQTKGVGASGSFRLAKSDKAKRSPGKKKKAVRRSTSPKKAARPRKARSPAKKPKATARKARKKSRASPKKAKKPKTVKAKSRKASKAKKVKRSKPRAKSGARKSPKKK.

The tract at residues M1–Y29 is disordered. Positions K13 to A24 are enriched in basic residues. S23, S30, S146, and S167 each carry phosphoserine. Residues S25–K98 enclose the H15 domain. A disordered region spans residues G87–K190. Residues R104 to K190 show a composition bias toward basic residues.

Belongs to the histone H1/H5 family. In terms of tissue distribution, erythroid cells.

It localises to the nucleus. The protein resides in the chromosome. Functionally, histone H5 performs the same function as H1, being necessary for the condensation of nucleosome chains into higher order structures, and replaces histone H1 in certain cells. The chain is Histone H5 from Gallus gallus (Chicken).